A 302-amino-acid chain; its full sequence is Pyridoxal 5'-phosphate synthase subunit PdxS (302 aa).

Aspartate 32 lines the D-ribose 5-phosphate pocket. The active-site Schiff-base intermediate with D-ribose 5-phosphate is the lysine 89. A D-ribose 5-phosphate-binding site is contributed by glycine 161. Arginine 173 is a D-glyceraldehyde 3-phosphate binding site. Residues glycine 222 and 243–244 (GS) each bind D-ribose 5-phosphate. The interval 276–302 (ASNIGEGMQGDPNADLPEDERMQDRGN) is disordered.

It belongs to the PdxS/SNZ family. In terms of assembly, in the presence of PdxT, forms a dodecamer of heterodimers.

The catalysed reaction is aldehydo-D-ribose 5-phosphate + D-glyceraldehyde 3-phosphate + L-glutamine = pyridoxal 5'-phosphate + L-glutamate + phosphate + 3 H2O + H(+). It participates in cofactor biosynthesis; pyridoxal 5'-phosphate biosynthesis. In terms of biological role, catalyzes the formation of pyridoxal 5'-phosphate from ribose 5-phosphate (RBP), glyceraldehyde 3-phosphate (G3P) and ammonia. The ammonia is provided by the PdxT subunit. Can also use ribulose 5-phosphate and dihydroxyacetone phosphate as substrates, resulting from enzyme-catalyzed isomerization of RBP and G3P, respectively. The polypeptide is Pyridoxal 5'-phosphate synthase subunit PdxS (Halobacterium salinarum (strain ATCC 29341 / DSM 671 / R1)).